Here is a 1044-residue protein sequence, read N- to C-terminus: Isoleucine--tRNA ligase (1044 aa).

The 'HIGH' region signature appears at 49–59 (PYCSGRIHLGT). The 'KMSKS' region signature appears at 591-595 (KMSKS). Position 594 (K594) interacts with ATP.

It belongs to the class-I aminoacyl-tRNA synthetase family. IleS type 2 subfamily. As to quaternary structure, monomer. The cofactor is Zn(2+).

It is found in the cytoplasm. It carries out the reaction tRNA(Ile) + L-isoleucine + ATP = L-isoleucyl-tRNA(Ile) + AMP + diphosphate. Functionally, catalyzes the attachment of isoleucine to tRNA(Ile). As IleRS can inadvertently accommodate and process structurally similar amino acids such as valine, to avoid such errors it has two additional distinct tRNA(Ile)-dependent editing activities. One activity is designated as 'pretransfer' editing and involves the hydrolysis of activated Val-AMP. The other activity is designated 'posttransfer' editing and involves deacylation of mischarged Val-tRNA(Ile). The sequence is that of Isoleucine--tRNA ligase from Methanothermobacter thermautotrophicus (strain ATCC 29096 / DSM 1053 / JCM 10044 / NBRC 100330 / Delta H) (Methanobacterium thermoautotrophicum).